The chain runs to 417 residues: MLKKDMNIADYDPELFNAIQNETLRQEEHIELIASENYTSPRVMEAQGSQLTNKYAEGYPGKRYYGGCEYVDVVETLAIERAKQLFGATYANVQPHSGSQANSAVYMALLKPGDTVLGMNLAHGGHLTHGSPVNFSGKLYNIIPYGIDESGKIDYEEMERIAIEHKPKMMIGGFSAYSGIVDWAKMREIADKIGAYLFVDMAHVAGLIAAGVYPNPVPHAHVVTSTTHKTLAGPRGGVILSAADDEDLYKKLNSAVFPGGQGGPLMHVIAGKAVAFKEALEPEFKVYQQQVVNNAKAMVEVFLERGYKIVSGGTSNHLMLVDLIGRDLTGKEADAALGSANITVNKNSVPNDPRSPFVTSGVRIGTPAITRRGFKEAESKELTGWICDILDDANNPAVIERVKGQVLALCARFPVYG.

Residues Leu121 and 125–127 each bind (6S)-5,6,7,8-tetrahydrofolate; that span reads GHL. Lys229 is modified (N6-(pyridoxal phosphate)lysine). 355 to 357 lines the (6S)-5,6,7,8-tetrahydrofolate pocket; the sequence is SPF.

This sequence belongs to the SHMT family. Homodimer. It depends on pyridoxal 5'-phosphate as a cofactor.

The protein localises to the cytoplasm. It carries out the reaction (6R)-5,10-methylene-5,6,7,8-tetrahydrofolate + glycine + H2O = (6S)-5,6,7,8-tetrahydrofolate + L-serine. It participates in one-carbon metabolism; tetrahydrofolate interconversion. The protein operates within amino-acid biosynthesis; glycine biosynthesis; glycine from L-serine: step 1/1. In terms of biological role, catalyzes the reversible interconversion of serine and glycine with tetrahydrofolate (THF) serving as the one-carbon carrier. This reaction serves as the major source of one-carbon groups required for the biosynthesis of purines, thymidylate, methionine, and other important biomolecules. Also exhibits THF-independent aldolase activity toward beta-hydroxyamino acids, producing glycine and aldehydes, via a retro-aldol mechanism. This chain is Serine hydroxymethyltransferase, found in Shewanella sp. (strain W3-18-1).